Reading from the N-terminus, the 425-residue chain is tRNA(Ile)-lysidine synthase (425 aa).

27 to 32 (SGGLDS) lines the ATP pocket.

It belongs to the tRNA(Ile)-lysidine synthase family.

The protein localises to the cytoplasm. The enzyme catalyses cytidine(34) in tRNA(Ile2) + L-lysine + ATP = lysidine(34) in tRNA(Ile2) + AMP + diphosphate + H(+). In terms of biological role, ligates lysine onto the cytidine present at position 34 of the AUA codon-specific tRNA(Ile) that contains the anticodon CAU, in an ATP-dependent manner. Cytidine is converted to lysidine, thus changing the amino acid specificity of the tRNA from methionine to isoleucine. This chain is tRNA(Ile)-lysidine synthase, found in Streptococcus pneumoniae (strain P1031).